A 37-amino-acid polypeptide reads, in one-letter code: MKVRPSVKPICEKCKIIKRGGRVMVICENPKHKQKQG.

This sequence belongs to the bacterial ribosomal protein bL36 family.

The protein is Large ribosomal subunit protein bL36 of Alkaliphilus oremlandii (strain OhILAs) (Clostridium oremlandii (strain OhILAs)).